A 602-amino-acid polypeptide reads, in one-letter code: 4-hydroxy-3-methylbut-2-en-1-yl diphosphate synthase (flavodoxin) (602 aa).

[4Fe-4S] cluster contacts are provided by Cys508, Cys511, Cys543, and Glu550.

The protein belongs to the IspG family. The cofactor is [4Fe-4S] cluster.

It catalyses the reaction (2E)-4-hydroxy-3-methylbut-2-enyl diphosphate + oxidized [flavodoxin] + H2O + 2 H(+) = 2-C-methyl-D-erythritol 2,4-cyclic diphosphate + reduced [flavodoxin]. It functions in the pathway isoprenoid biosynthesis; isopentenyl diphosphate biosynthesis via DXP pathway; isopentenyl diphosphate from 1-deoxy-D-xylulose 5-phosphate: step 5/6. Its function is as follows. Converts 2C-methyl-D-erythritol 2,4-cyclodiphosphate (ME-2,4cPP) into 1-hydroxy-2-methyl-2-(E)-butenyl 4-diphosphate. This Chlamydia trachomatis serovar D (strain ATCC VR-885 / DSM 19411 / UW-3/Cx) protein is 4-hydroxy-3-methylbut-2-en-1-yl diphosphate synthase (flavodoxin).